The chain runs to 166 residues: ATP synthase subunit b (166 aa).

The chain crosses the membrane as a helical span at residues 10 to 30; that stretch reads LLFWMVIVFGIVFVILAKYGF.

Belongs to the ATPase B chain family. In terms of assembly, F-type ATPases have 2 components, F(1) - the catalytic core - and F(0) - the membrane proton channel. F(1) has five subunits: alpha(3), beta(3), gamma(1), delta(1), epsilon(1). F(0) has three main subunits: a(1), b(2) and c(10-14). The alpha and beta chains form an alternating ring which encloses part of the gamma chain. F(1) is attached to F(0) by a central stalk formed by the gamma and epsilon chains, while a peripheral stalk is formed by the delta and b chains.

It localises to the cell inner membrane. In terms of biological role, f(1)F(0) ATP synthase produces ATP from ADP in the presence of a proton or sodium gradient. F-type ATPases consist of two structural domains, F(1) containing the extramembraneous catalytic core and F(0) containing the membrane proton channel, linked together by a central stalk and a peripheral stalk. During catalysis, ATP synthesis in the catalytic domain of F(1) is coupled via a rotary mechanism of the central stalk subunits to proton translocation. Its function is as follows. Component of the F(0) channel, it forms part of the peripheral stalk, linking F(1) to F(0). The chain is ATP synthase subunit b from Phocaeicola vulgatus (strain ATCC 8482 / DSM 1447 / JCM 5826 / CCUG 4940 / NBRC 14291 / NCTC 11154) (Bacteroides vulgatus).